The sequence spans 935 residues: MAPAEILNGKEISAQIRARLKNQVTQLKEQVPGFTPRLAILQVGNRDDSNLYINVKLKAAEEIGIKATHIKLPRTTTESEVMKYITSLNEDSTVHGFLVQLPLDSENSINTEEVINAIAPEKDVDGLTSINAGKLARGDLNDCFIPCTPKGCLELIKETGVPIAGRHAVVVGRSKIVGAPMHDLLLWNNATVTTCHSKTAHLDEEVNKGDILVVATGQPEMVKGEWIKPGAIVIDCGINYVPDDKKPNGRKVVGDVAYDEAKERASFITPVPGGVGPMTVAMLMQSTVESAKRFLEKFKPGKWMIQYNNLNLKTPVPSDIDISRSCKPKPIGKLAREIGLLSEEVELYGETKAKVLLSALERLKHRPDGKYVVVTGITPTPLGEGKSTTTIGLVQALGAHLYQNVFACVRQPSQGPTFGIKGGAAGGGYSQVIPMEEFNLHLTGDIHAITAANNLVAAAIDARIFHELTQTDKALFNRLVPSVNGVRRFSDIQIRRLKRLGIEKTDPTTLTDEEINRFARLDIDPETITWQRVLDTNDRFLRKITIGQAPTEKGHTRTAQFDISVASEIMAVLALTTSLEDMRERLGKMVVASSKKGEPVSAEDLGVSGALTVLMKDAIKPNLMQTLEGTPVFVHAGPFANIAHGNSSIIADRIALKLVGPEGFVVTEAGFGADIGMEKFFNIKCRYSGLCPHVVVLVATVRALKMHGGGPTVTAGLPLPKAYIQENLELVEKGFSNLKKQIENARMFGIPVVVAVNAFKTDTESELDLISRLSREHGAFDAVKCTHWAEGGKGALALAQAVQRAAQAPSSFQLLYDLKLPVEDKIRIIAQKIYGADDIELLPEAQHKAEVYTKQGFGNLPICMAKTHLSLSHNPEQKGVPTGFILPIRDIRASVGAGFLYPLVGTMSTMPGLPTRPCFYDIDLDPETEQVNGLF.

M1 bears the N-acetylmethionine mark. The interval 2 to 291 is methylenetetrahydrofolate dehydrogenase and methenyltetrahydrofolate cyclohydrolase (D/C) domain; that stretch reads APAEILNGKE…MLMQSTVESA (290 aa). Residues 52–56 and 99–101 contribute to the substrate site; these read YINVK and VQL. K56 is a catalytic residue. Residues 172–174 and S197 contribute to the NADP(+) site; that span reads GRS. 272 to 276 is a binding site for substrate; the sequence is PGGVG. Residues 310-935 are formyltetrahydrofolate synthetase domain; sequence LNLKTPVPSD…PETEQVNGLF (626 aa). S318 is subject to Phosphoserine. 380-387 contacts ATP; it reads TPLGEGKS. A phosphoserine mark is found at S413 and S490.

In the N-terminal section; belongs to the tetrahydrofolate dehydrogenase/cyclohydrolase family. The protein in the C-terminal section; belongs to the formate--tetrahydrofolate ligase family. As to quaternary structure, homodimer. Ubiquitous.

The protein resides in the cytoplasm. It catalyses the reaction (6R)-5,10-methylene-5,6,7,8-tetrahydrofolate + NADP(+) = (6R)-5,10-methenyltetrahydrofolate + NADPH. It carries out the reaction (6R)-5,10-methenyltetrahydrofolate + H2O = (6R)-10-formyltetrahydrofolate + H(+). The enzyme catalyses (6S)-5,6,7,8-tetrahydrofolate + formate + ATP = (6R)-10-formyltetrahydrofolate + ADP + phosphate. Its pathway is one-carbon metabolism; tetrahydrofolate interconversion. Functionally, trifunctional enzyme that catalyzes the interconversion of three forms of one-carbon-substituted tetrahydrofolate: (6R)-5,10-methylene-5,6,7,8-tetrahydrofolate, 5,10-methenyltetrahydrofolate and (6S)-10-formyltetrahydrofolate. These derivatives of tetrahydrofolate are differentially required in nucleotide and amino acid biosynthesis, (6S)-10-formyltetrahydrofolate being required for purine biosynthesis while (6R)-5,10-methylene-5,6,7,8-tetrahydrofolate is used for serine and methionine biosynthesis for instance. The sequence is that of C-1-tetrahydrofolate synthase, cytoplasmic (MTHFD1) from Homo sapiens (Human).